The following is a 1561-amino-acid chain: Synemin (1561 aa).

The segment at M1 to S10 is head. Residues E11–R49 form a coil 1A region. The segment at E11–N320 is interaction with DMD and UTRN. The region spanning E11 to E322 is the IF rod domain. Residues E50–A58 are linker 1. The tract at residues L59–T163 is coil 1B. The tract at residues M164 to S186 is linker 12. A coil 2 region spans residues Y187–V300. The interval K301–F1561 is tail. Polar residues-rich tracts occupy residues S371–V390 and S401–S421. Disordered stretches follow at residues S371–S421, D549–K574, and E591–T637. A compositionally biased stretch (basic and acidic residues) spans G601–T624. Over residues Q625–T637 the composition is skewed to polar residues. T653 bears the Phosphothreonine mark. Phosphoserine occurs at positions 655, 778, 780, 1044, 1049, 1077, 1087, 1179, and 1182. Disordered regions lie at residues S1033–G1061 and S1075–V1099. Positions V1086–V1099 are enriched in polar residues. The tract at residues V1152–Q1453 is interaction with TLN1 and VCL. A disordered region spans residues A1212 to E1231. Residues G1222 to E1231 are compositionally biased toward basic and acidic residues. Positions A1242–G1557 are interaction with DMD and UTRN. Position 1425 is a phosphoserine (S1425). R1481 is subject to Omega-N-methylarginine. A disordered region spans residues D1491–G1519.

The protein belongs to the intermediate filament family. In terms of assembly, interacts with DES, DMD, DTNA, TLN1, UTRN and VCL. Isoform 1 and isoform 2 interact with GFAP and VIM. Isoform 2 and isoform 3 are detected in adult skeletal muscle, heart and bladder, whereas isoform 1 is only detected in adult bladder (at protein level).

It localises to the cytoplasm. It is found in the cytoskeleton. Its subcellular location is the cell junction. The protein resides in the adherens junction. In terms of biological role, type-VI intermediate filament (IF) which plays an important cytoskeletal role within the muscle cell cytoskeleton. It forms heteromeric IFs with desmin and/or vimentin, and via its interaction with cytoskeletal proteins alpha-dystrobrevin, dystrophin, talin-1, utrophin and vinculin, is able to link these heteromeric IFs to adherens-type junctions, such as to the costameres, neuromuscular junctions, and myotendinous junctions within striated muscle cells. The protein is Synemin of Mus musculus (Mouse).